The sequence spans 427 residues: Serine protease HTRA2, mitochondrial (427 aa).

Residues H33 to S57 are disordered. A helical transmembrane segment spans residues V67–G87. The IAP-binding signature appears at A78–S81. Positions S144–L307 are serine protease. Residues H162, D194, and S271 each act as charge relay system in the active site. The PDZ domain occupies M330–V415.

This sequence belongs to the peptidase S1C family. As to quaternary structure, interacts with th/DIAP1 (via BIR 2 domain).

It localises to the mitochondrion intermembrane space. It is found in the mitochondrion membrane. It catalyses the reaction Cleavage of non-polar aliphatic amino-acids at the P1 position, with a preference for Val, Ile and Met. At the P2 and P3 positions, Arg is selected most strongly with a secondary preference for other hydrophilic residues.. Its function is as follows. Serine protease that shows proteolytic activity against a non-specific substrate beta-casein. Promotes or induces cell death either by direct binding to and inhibition of BIRC proteins (also called inhibitor of apoptosis proteins, IAPs), leading to an increase in caspase activity, or by a BIRC inhibition-independent, caspase-independent and serine protease activity-dependent mechanism. Can antagonize antiapoptotic activity of th/Diap1 by directly inducing the degradation of th/Diap1. This chain is Serine protease HTRA2, mitochondrial, found in Drosophila persimilis (Fruit fly).